We begin with the raw amino-acid sequence, 159 residues long: Ribosomal RNA large subunit methyltransferase H (159 aa).

Residues Leu-76, Gly-108, and 127 to 132 (FSRMTF) contribute to the S-adenosyl-L-methionine site.

This sequence belongs to the RNA methyltransferase RlmH family. In terms of assembly, homodimer.

The protein resides in the cytoplasm. The enzyme catalyses pseudouridine(1915) in 23S rRNA + S-adenosyl-L-methionine = N(3)-methylpseudouridine(1915) in 23S rRNA + S-adenosyl-L-homocysteine + H(+). In terms of biological role, specifically methylates the pseudouridine at position 1915 (m3Psi1915) in 23S rRNA. The polypeptide is Ribosomal RNA large subunit methyltransferase H (Clostridioides difficile (strain 630) (Peptoclostridium difficile)).